Consider the following 90-residue polypeptide: Envelope protein US9 (90 aa).

The Intravirion segment spans residues Met-1 to Met-67. An Internalization motif motif is present at residues Tyr-21–Ala-24. The segment at Glu-30 to Glu-39 is acidic. Phosphoserine; by host CK2 occurs at positions 34 and 36. Residues Val-68 to Leu-88 form a helical; Signal-anchor for type II membrane protein membrane-spanning segment. The Virion surface portion of the chain corresponds to Leu-89 to Arg-90.

The protein belongs to the alphaherpesvirinae envelope protein US9 family. In terms of processing, phosphorylated on serines within the acidic cluster, possibly by host CK2. Phosphorylation determines whether endocytosed viral US9 traffics to the trans-Golgi network or recycles to the cell membrane.

It is found in the virion membrane. The protein resides in the host Golgi apparatus membrane. The protein localises to the host smooth endoplasmic reticulum membrane. Its subcellular location is the host cell membrane. Functionally, essential for the anterograde spread of the infection throughout the host nervous system. Together with the gE/gI heterodimer, US9 is involved in the sorting and transport of viral structural components toward axon tips. This is Envelope protein US9 from Homo sapiens (Human).